The chain runs to 1659 residues: Fatty acid synthase subunit alpha (1659 aa).

The interval 114-139 is disordered; the sequence is TQAQASGGAGTIAGAGSSTAPVTAPP. Positions 160-235 constitute a Carrier domain; sequence AQAFEIVRTL…AALQKTFTGQ (76 aa). Ser195 carries the O-(pantetheine 4'-phosphoryl)serine modification. The segment at 588–826 is ketoreductase (KR) domain; the sequence is GRSVLITGAG…LCLMFNTMCS (239 aa). A Ketosynthase family 3 (KS3) domain is found at 1030-1575; that stretch reads KQLLHEVLIQ…QKGAQTIVVH (546 aa). Residues Cys1217, His1458, and His1499 each act as for beta-ketoacyl synthase activity in the active site. The segment at 1631–1659 is disordered; it reads ETLLDPTPPQTNVDDRVARSIVQQESAEP.

It belongs to the thiolase-like superfamily. Fungal fatty acid synthetase subunit alpha family. In terms of assembly, [Alpha(6)beta(6)] hexamers of two multifunctional subunits (alpha and beta). 4'-phosphopantetheine is transferred from CoA to a specific serine of the acyl carrier domain by the C-terminal PPT domain. This modification is essential for activity because fatty acids are bound in thioester linkage to the sulfhydryl of the prosthetic group.

It catalyses the reaction acetyl-CoA + n malonyl-CoA + 2n NADPH + 4n H(+) = a long-chain-acyl-CoA + n CoA + n CO2 + 2n NADP(+).. The enzyme catalyses a fatty acyl-[ACP] + malonyl-[ACP] + H(+) = a 3-oxoacyl-[ACP] + holo-[ACP] + CO2. The catalysed reaction is a (3R)-hydroxyacyl-[ACP] + NADP(+) = a 3-oxoacyl-[ACP] + NADPH + H(+). The protein operates within secondary metabolite biosynthesis. Fatty acid synthase subunit alpha; part of the gene cluster that mediates the biosynthesis of aspercryptins, linear lipopeptides built from six amino acids including 2 highly unusual and nonproteogenic amino acids, 2-amino-octanoic acid (2aoa) and 2-amino-dodecanol (2adol). The core structure of aspercryptins is as follows: Ser/Ala-Thr-Ile/Val-2aoa-Asn-2adol. The first step of aspercryptin biosynthesis is the generation of the fatty acid precursors, octanoic and dodecanoic acids, by the FAS subunits atnF and atnM. The fatty acid precursors are likely transformed into the corresponding alpha-amino fatty acids in three steps. First, they are hydroxylated by the cytochrome P450 monooxygenase atnE, then oxidized to the corresponding alpha-keto acids by the NAD(P)-dependent oxidoreductase atnD, and finally converted to the alpha-amino fatty acids by the PLP-dependent aminotransferases atnH or atnJ. the alpha-amino fatty acids, 2-amino-octanoic and 2-amino-dodecanoic acids, are recognized, activated, and covalently tethered to the NRPS atnA by its fourth and sixth adenylation domains. The second module of atnA is the Thr module and contains an epimerase (E) domain responsible for the epimerization of Thr to D-allo-Thr. Additionally, despite atnA having only one epimerase domain, the first amino acid of aspercryptin A1 is D-Ser, suggesting that serine is either loaded directly as D-Ser on the first module or that the epimerase domain in the threonine module epimerizes both L-Ser and L-Thr. After condensation of the hexapeptide of aspercryptin, the C-terminal reductase (TE) domain might be involved in the reductive release and production of the aldehyde hexapeptide. Further reduction would generate aspercryptins. The variety of aspercryptins produced reflects the flexibility of the atnA NRPS, allowing incorporation of alanine instead of serine, valine for isoleucine, and a C10 fatty amino alcohol instead of the C12 version. AtnB seems to be involved in the selectivity for Ile versus Val by the third module. Moreover, type B, C and D aspercryptins have an additional N-terminal cichorine, acetyl and propionyl group respectively. The polypeptide is Fatty acid synthase subunit alpha (Emericella nidulans (strain FGSC A4 / ATCC 38163 / CBS 112.46 / NRRL 194 / M139) (Aspergillus nidulans)).